Here is a 152-residue protein sequence, read N- to C-terminus: Superoxide dismutase [Cu-Zn] (152 aa).

Residues histidine 45, histidine 47, and histidine 62 each coordinate Cu cation. Cysteine 56 and cysteine 145 form a disulfide bridge. Positions 62, 70, 79, and 82 each coordinate Zn(2+). Histidine 119 contacts Cu cation.

Belongs to the Cu-Zn superoxide dismutase family. As to quaternary structure, homodimer. The cofactor is Cu cation. Zn(2+) serves as cofactor.

It localises to the cytoplasm. The enzyme catalyses 2 superoxide + 2 H(+) = H2O2 + O2. Destroys radicals which are normally produced within the cells and which are toxic to biological systems. In Carica papaya (Papaya), this protein is Superoxide dismutase [Cu-Zn] (SODCC).